A 72-amino-acid chain; its full sequence is MFTMKKPLLLLFFLGTISLSLCQEERGADEDDGEMTEEVKRGLWNTIKEAGKKFAINVLDKIRCGIAGGCKT.

An N-terminal signal peptide occupies residues Met-1 to Cys-22. A propeptide spans Gln-23–Val-39 (removed in mature form). Cysteines 64 and 70 form a disulfide.

As to expression, expressed by the skin glands.

Its subcellular location is the secreted. Functionally, antimicrobial peptide active against a variety of Gram-positive and some Gram-negative bacterial strains. Has antifungal activity against a slime mold isolate. Has hemolytic activity against human erythrocytes. The polypeptide is Palustrin-2CG1 (Amolops chunganensis (Chungan torrent frog)).